The following is a 187-amino-acid chain: Cytokinin riboside 5'-monophosphate phosphoribohydrolase (187 aa).

Substrate-binding positions include Glu-80, 98–99, 115–121, and Thr-127; these read RK and GVGTLDE.

It belongs to the LOG family.

It catalyses the reaction N(6)-(dimethylallyl)adenosine 5'-phosphate + H2O = N(6)-dimethylallyladenine + D-ribose 5-phosphate. It carries out the reaction 9-ribosyl-trans-zeatin 5'-phosphate + H2O = trans-zeatin + D-ribose 5-phosphate. Functionally, catalyzes the hydrolytic removal of ribose 5'-monophosphate from nitrogen N6-modified adenosines, the final step of bioactive cytokinin synthesis. The protein is Cytokinin riboside 5'-monophosphate phosphoribohydrolase of Mycobacterium marinum (strain ATCC BAA-535 / M).